Consider the following 378-residue polypeptide: Phospho-N-acetylmuramoyl-pentapeptide-transferase (378 aa).

Transmembrane regions (helical) follow at residues Leu26–Asn46, Leu57–Leu77, Met103–Ala123, Leu127–Trp147, Gly171–Val191, Trp195–Ala215, Gly225–Leu245, Pro247–Trp267, Val275–Ala295, Leu302–Tyr322, and Ile356–Trp376.

It belongs to the glycosyltransferase 4 family. MraY subfamily. Mg(2+) is required as a cofactor.

The protein localises to the cell inner membrane. The catalysed reaction is UDP-N-acetyl-alpha-D-muramoyl-L-alanyl-gamma-D-glutamyl-meso-2,6-diaminopimeloyl-D-alanyl-D-alanine + di-trans,octa-cis-undecaprenyl phosphate = di-trans,octa-cis-undecaprenyl diphospho-N-acetyl-alpha-D-muramoyl-L-alanyl-D-glutamyl-meso-2,6-diaminopimeloyl-D-alanyl-D-alanine + UMP. It functions in the pathway cell wall biogenesis; peptidoglycan biosynthesis. Functionally, catalyzes the initial step of the lipid cycle reactions in the biosynthesis of the cell wall peptidoglycan: transfers peptidoglycan precursor phospho-MurNAc-pentapeptide from UDP-MurNAc-pentapeptide onto the lipid carrier undecaprenyl phosphate, yielding undecaprenyl-pyrophosphoryl-MurNAc-pentapeptide, known as lipid I. The sequence is that of Phospho-N-acetylmuramoyl-pentapeptide-transferase from Thermosynechococcus vestitus (strain NIES-2133 / IAM M-273 / BP-1).